The primary structure comprises 187 residues: MDLDKIGAETRQILQDVLDKASLDEGDVFVLGLSSSEVMGGHIGRNSSLEVGQVIVKTVLDILEEKGIFLAVQGCEHLNRALVVERSLAKKKDLEIVNVLPTLHAGGSGQLAAFQYMKDPVEVEFIVAQAGLDIGDTAIGMHVKHVQIPIRPKLKSVGAAHVTALASRPKLIGGSRAAYREDKIRKD.

The protein belongs to the UPF0340 family.

The chain is UPF0340 protein SGO_0411 from Streptococcus gordonii (strain Challis / ATCC 35105 / BCRC 15272 / CH1 / DL1 / V288).